The chain runs to 492 residues: Bifunctional purine biosynthesis protein PurH (492 aa).

One can recognise an MGS-like domain in the interval 1–144 (MKKAILSVSN…KNYKHVTTIV (144 aa)).

The protein belongs to the PurH family.

The enzyme catalyses (6R)-10-formyltetrahydrofolate + 5-amino-1-(5-phospho-beta-D-ribosyl)imidazole-4-carboxamide = 5-formamido-1-(5-phospho-D-ribosyl)imidazole-4-carboxamide + (6S)-5,6,7,8-tetrahydrofolate. It catalyses the reaction IMP + H2O = 5-formamido-1-(5-phospho-D-ribosyl)imidazole-4-carboxamide. It participates in purine metabolism; IMP biosynthesis via de novo pathway; 5-formamido-1-(5-phospho-D-ribosyl)imidazole-4-carboxamide from 5-amino-1-(5-phospho-D-ribosyl)imidazole-4-carboxamide (10-formyl THF route): step 1/1. It functions in the pathway purine metabolism; IMP biosynthesis via de novo pathway; IMP from 5-formamido-1-(5-phospho-D-ribosyl)imidazole-4-carboxamide: step 1/1. In Staphylococcus aureus (strain USA300), this protein is Bifunctional purine biosynthesis protein PurH.